We begin with the raw amino-acid sequence, 231 residues long: Large ribosomal subunit protein uL1 (231 aa).

The protein belongs to the universal ribosomal protein uL1 family. In terms of assembly, part of the 50S ribosomal subunit.

Functionally, binds directly to 23S rRNA. The L1 stalk is quite mobile in the ribosome, and is involved in E site tRNA release. In terms of biological role, protein L1 is also a translational repressor protein, it controls the translation of the L11 operon by binding to its mRNA. The polypeptide is Large ribosomal subunit protein uL1 (Herminiimonas arsenicoxydans).